A 352-amino-acid polypeptide reads, in one-letter code: NADH-ubiquinone oxidoreductase chain 2 (352 aa).

11 helical membrane passes run 4 to 24, 26 to 46, 60 to 80, 96 to 116, 124 to 144, 150 to 170, 178 to 198, 205 to 225, 241 to 261, 274 to 294, and 330 to 350; these read MISIFLFLTVVSGTIIVVSAE, WFVIWLGLELSTLALIPILWF, FLVQAFSAALLLNSALIQAWF, LCLSVALAFNLGLAACHFWLP, FIQGLIIATWQKIAPLFLLFY, FSYFIILAALISILVGGWGGL, ILAFSSIGNMGWIVVTSAFSL, LFIYLVINTSIFLILDFLSIF, ITLVILTILSLGGLPPLTGFI, GFIFFSSVMIIGSLLSLFFYL, and LVSSFSVLSILAIPLTIPLYI.

The protein belongs to the complex I subunit 2 family.

It is found in the mitochondrion inner membrane. The catalysed reaction is a ubiquinone + NADH + 5 H(+)(in) = a ubiquinol + NAD(+) + 4 H(+)(out). Functionally, core subunit of the mitochondrial membrane respiratory chain NADH dehydrogenase (Complex I) that is believed to belong to the minimal assembly required for catalysis. Complex I functions in the transfer of electrons from NADH to the respiratory chain. The immediate electron acceptor for the enzyme is believed to be ubiquinone. This Paracentrotus lividus (Common sea urchin) protein is NADH-ubiquinone oxidoreductase chain 2 (ND2).